The chain runs to 146 residues: Leghemoglobin 2 (146 aa).

The Globin domain maps to Gly2–Ser146. Nitrated tyrosine is present on Tyr30. Ser45 serves as a coordination point for heme b. A Phosphoserine modification is found at Ser45. His61 contributes to the O2 binding site. Heme b is bound by residues Lys64, His93, and Lys96. Tyr134 carries the post-translational modification Nitrated tyrosine.

It belongs to the plant globin family. Monomer. Nitrated in effective nodules and particularly in hypoxic conditions; this mechanism may play a protective role in the symbiosis by buffering toxic peroxynitrite NO(2)(-). Nitration level decrease during nodule senescence. In terms of processing, phosphorylation at Ser-45 disrupts the molecular environment of its porphyrin ring oxygen binding pocket, thus leading to a reduced oxygen consumption and to the delivery of oxygen O(2) to symbiosomes. In terms of tissue distribution, specifically and strongly expressed in root nodules and at low levels in seedlings.

The protein resides in the cytoplasm. It is found in the cytosol. The protein localises to the nucleus. Functionally, leghemoglobin that reversibly binds oxygen O(2) through a pentacoordinated heme iron. In root nodules, facilitates the diffusion of oxygen to the bacteroids while preventing the bacterial nitrogenase from being inactivated by buffering dioxygen, nitric oxide and carbon monoxide, and promoting the formation of reactive oxygen species (ROS, e.g. H(2)O(2)). This role is essential for symbiotic nitrogen fixation (SNF). The protein is Leghemoglobin 2 of Lotus japonicus (Lotus corniculatus var. japonicus).